Consider the following 478-residue polypeptide: Hexokinase (478 aa).

Residues 21–465 form the Hexokinase domain; that stretch reads EYLLKELTEL…LGAGAAIIAA (445 aa). The segment at 75 to 208 is hexokinase small subdomain; it reads TGKEMGDYLA…KVPIEVVALI (134 aa). Lys111 lines the ATP pocket. Residues 151 to 177 form a glucose-binding region; it reads PLGFTFSYPASQGSINEGYLQRWTKGF. A hexokinase large subdomain region spans residues 209–454; the sequence is NDTTGTLVAS…DPIVIVPAED (246 aa).

This sequence belongs to the hexokinase family. In terms of assembly, monomer.

It catalyses the reaction a D-hexose + ATP = a D-hexose 6-phosphate + ADP + H(+). The enzyme catalyses D-fructose + ATP = D-fructose 6-phosphate + ADP + H(+). The catalysed reaction is D-glucose + ATP = D-glucose 6-phosphate + ADP + H(+). It functions in the pathway carbohydrate metabolism; hexose metabolism. It participates in carbohydrate degradation; glycolysis; D-glyceraldehyde 3-phosphate and glycerone phosphate from D-glucose: step 1/4. Catalyzes the phosphorylation of hexose, such as D-glucose and D-fructose, to hexose 6-phosphate (D-glucose 6-phosphate and D-fructose 6-phosphate, respectively). Mediates the initial step of glycolysis by catalyzing phosphorylation of D-glucose to D-glucose 6-phosphate. In Schwanniomyces occidentalis (Yeast), this protein is Hexokinase (HXK).